The following is a 1445-amino-acid chain: Tensin-3 (1445 aa).

Residues 1-170 (MEEGHGLDLT…QFLSGLLSGS (170 aa)) form the Phosphatase tensin-type domain. Residues 175–301 (ASPLFLHFVI…GKVELVFSAT (127 aa)) enclose the C2 tensin-type domain. T323 is modified (phosphothreonine). Phosphoserine is present on residues S332 and S361. Residues 358-421 (RKKSSSDPGI…GTRRGLSAQE (64 aa)) form a disordered region. Positions 386 to 400 (TLSVSSDSGHSTASA) are enriched in polar residues. Residues S440 and S516 each carry the phosphoserine modification. The interval 538–568 (VPDLGLGMDGPYERERTFGSREPKQPQPLLR) is disordered. Over residues 548 to 561 (PYERERTFGSREPK) the composition is skewed to basic and acidic residues. A Phosphoserine modification is found at S571. Disordered regions lie at residues 618 to 695 (DNPG…TLDI) and 717 to 769 (PTHM…QPLG). Position 632 is a phosphothreonine (T632). Residues S649, S660, S687, and S690 each carry the phosphoserine modification. Residues 723–733 (LGSQANGSVSP) are compositionally biased toward polar residues. S735 and S776 each carry phosphoserine. Residue Y780 is modified to Phosphotyrosine. S811, S866, and S901 each carry phosphoserine. Disordered stretches follow at residues 859-981 (ALRH…TRKD) and 1076-1127 (GHSS…PHSG). Pro residues predominate over residues 864-873 (PFSPPEPPLS). Positions 914-935 (ASSTPSFQQAFASSCTISSNGP) are enriched in polar residues. The span at 1099–1109 (PEKKRASEGDR) shows a compositional bias: basic and acidic residues. Over residues 1110 to 1127 (SLGSVSPSSSGFSSPHSG) the composition is skewed to low complexity. Phosphoserine occurs at positions 1149 and 1154. An SH2 domain is found at 1172 to 1282 (WYKADISREQ…ALPCKLLIPE (111 aa)). Residues S1293 and S1441 each carry the phosphoserine modification. Positions 1310-1444 (ACNVWYLNSV…SKVMIGSPKK (135 aa)) constitute a PTB domain.

This sequence belongs to the PTEN phosphatase protein family. Interacts with EGFR; EGF promotes the interaction with EGFR. Interacts with PTK2/FAK1 and BCAR1. Tyrosine phosphorylation is critical for these interactions. Interacts with Rho GTPase-activating protein DLC1 and with the regulatory p85 subunit of the PI3K kinase complex; in resting cells, interacts (via C2 tensin-type domain) with DLC1 but, following growth factor stimulation, TNS3 is phosphorylated which leads to weakened interaction with DLC1 and enhanced interaction (via C2 tensin-type domain) with p85 while DLC1 interaction with PTEN increases. Interacts (when phosphorylated on the SH2 domain) with integrins ITGB1, ITGB3 and ITGB5 and with scaffolding protein PEAK1 (phosphorylated on 'Tyr-635'); mediates the association of PEAK1 with ITGB1, ITGB3 and ITGB5. Interacts (via N-terminus) with DOCK5 (via N-terminus); the interaction increases DOCK5 guanine nucleotide exchange activity towards Rac. Interacts with receptor tyrosine kinase MET. Post-translationally, phosphorylated on Ser/Thr and Tyr residues. Phosphorylated on Thr-323 in the C2-type tensin domain following EGF stimulation which changes its binding preference from DLC1 to the p85 regulatory subunit of the PI3K kinase complex. EGF induces tyrosine phosphorylation in a time- and dose-dependent manner. Phosphorylation of the SH2 domain enhances interaction with PEAK1. Expressed in umbilical vein endothelial cells, epithelial cells, and fibroblasts cells (at protein level). Highly expressed in thyroid, kidney and placenta. Low expression in heart, skeletal muscle, spleen, liver, and lung. Expressed at higher levels in tonsil-derived mesenchymal stem cells (MSCs) than in adipose tissue-derived MSCs or bone marrow-derived MSCs. Expressed in tumor endothelial cells. Expression seems to be down-regulated in thyroid tumor tissues and in anaplastic carcinomas.

The protein localises to the cell junction. The protein resides in the focal adhesion. It localises to the cell projection. It is found in the podosome. Functionally, may act as a protein phosphatase and/or a lipid phosphatase. Involved in the dissociation of the integrin-tensin-actin complex. EGF activates TNS4 and down-regulates TNS3 which results in capping the tail of ITGB1. Increases DOCK5 guanine nucleotide exchange activity towards Rac and plays a role in osteoclast podosome organization. Enhances RHOA activation in the presence of DLC1. Required for growth factor-induced epithelial cell migration; growth factor stimulation induces TNS3 phosphorylation which changes its binding preference from DLC1 to the p85 regulatory subunit of the PI3K kinase complex, displacing PI3K inhibitor PTEN and resulting in translocation of the TNS3-p85 complex to the leading edge of migrating cells to promote RAC1 activation. Meanwhile, PTEN switches binding preference from p85 to DLC1 and the PTEN-DLC1 complex translocates to the posterior of migrating cells to activate RHOA. Acts as an adapter protein by bridging the association of scaffolding protein PEAK1 with integrins ITGB1, ITGB3 and ITGB5 which contributes to the promotion of cell migration. Controls tonsil-derived mesenchymal stem cell proliferation and differentiation by regulating the activity of integrin ITGB1. This Homo sapiens (Human) protein is Tensin-3 (TNS3).